The chain runs to 548 residues: Mannosyltransferase APTG1 (548 aa).

Residues 1 to 23 (MDIRKRKNAGGDGDGGADGASVN) are disordered. 3 consecutive transmembrane segments (helical) span residues 41–61 (IFLF…TYFN), 98–118 (LFAF…YIMI), and 146–166 (GNVA…FFCL). Residue N167 is glycosylated (N-linked (GlcNAc...) asparagine). 7 consecutive transmembrane segments (helical) span residues 169–189 (TFSN…WPCI), 204–224 (LVIA…WLYV), 238–258 (FIIL…CLLD), 260–280 (LMYG…FLSS), 294–314 (FTQG…AGII), 320–340 (KLSA…HKEF), and 342–362 (FVLP…AQME). N382 carries an N-linked (GlcNAc...) asparagine glycan. Residues 392–412 (LSVYFLLATNIPMALYMSLFH) traverse the membrane as a helical segment. A glycan (N-linked (GlcNAc...) asparagine) is linked at N490.

The protein belongs to the glycosyltransferase 22 family. In terms of tissue distribution, mostly expressed, mainly in vascular tissues, in leaves, roots, stems, flowers, siliques and pollen, and, to a lower extent, in seedlings.

The protein localises to the endoplasmic reticulum membrane. Mannosyltransferase involved in glycosylphosphatidylinositol-anchor biosynthesis. Required for the pollen tube micropylar guidance and embryo development by regulating GPI-anchor mediated protein localization (e.g. COBL10 and A36). In Arabidopsis thaliana (Mouse-ear cress), this protein is Mannosyltransferase APTG1.